A 376-amino-acid chain; its full sequence is Proton extrusion protein PxcA (376 aa).

4 consecutive transmembrane segments (helical) span residues 150 to 170 (TLIS…VQQM), 251 to 271 (AVKN…VCII), 299 to 319 (IILF…QVLL), and 334 to 354 (FILL…KYWI).

It belongs to the CemA family.

Its subcellular location is the cell inner membrane. In terms of biological role, required for H(+) efflux immediately after light irradiation to form a rapid H(+) concentration gradient across the thylakoid membranes. Together with PxcL, contributes to transient H(+) uptake following dark to light transition. This chain is Proton extrusion protein PxcA, found in Prochlorococcus marinus (strain MIT 9303).